A 207-amino-acid polypeptide reads, in one-letter code: MSNTWFTSDLHIGHKRLMEIRNLADDVEEHDATLAKAWDSVVGKDDTVWILGDISSGSTKGQIHALGWISDRPGRKRLILGNHDGPHPMNRDAHKLVGAYWMVFEHVSTAARIRVPLYGDAGGHTDVLLSHFPYVGDHTSEDRHTQWRLRDDGKILIHGHTHSPMILSRHIHRRQIHVGIDAWGRLVSRDEIYDLVNHIHEEEGVHT.

The sequence is that of Gene 66 protein (66) from Mycobacterium (Mycobacteriophage L5).